The primary structure comprises 167 residues: S-ribosylhomocysteine lyase (167 aa).

Residues His-54, His-58, and Cys-128 each coordinate Fe cation.

This sequence belongs to the LuxS family. In terms of assembly, homodimer. It depends on Fe cation as a cofactor.

The enzyme catalyses S-(5-deoxy-D-ribos-5-yl)-L-homocysteine = (S)-4,5-dihydroxypentane-2,3-dione + L-homocysteine. Its function is as follows. Involved in the synthesis of autoinducer 2 (AI-2) which is secreted by bacteria and is used to communicate both the cell density and the metabolic potential of the environment. The regulation of gene expression in response to changes in cell density is called quorum sensing. Catalyzes the transformation of S-ribosylhomocysteine (RHC) to homocysteine (HC) and 4,5-dihydroxy-2,3-pentadione (DPD). The chain is S-ribosylhomocysteine lyase from Haemophilus influenzae (strain PittGG).